The chain runs to 369 residues: uncharacterized protein (369 aa).

Transmembrane regions (helical) follow at residues 25-45 (QFVALSIWIILITLFSLWYDW), 47-67 (FCLLNLTIVGFFIAFCYFVPA), 119-139 (LNIVHLFVISGFHLSFLFNLM), 152-172 (LSGFAVLLIYLFLVGFAFSAL), 206-226 (HALNNFGFNFSFLACFVLLFV), 235-255 (LKPLVSSSLILIVISPLSLYL), 272-292 (PIALFYFCVSWIILPFIGVFG), 296-316 (FGIYLPLKMLSEWSLKVTVFL), and 323-343 (LIFFFVYYGLLGLLYTIFTVA).

To B.subtilis ComEC.

Its subcellular location is the cell membrane. This is an uncharacterized protein from Mycoplasma genitalium (strain ATCC 33530 / DSM 19775 / NCTC 10195 / G37) (Mycoplasmoides genitalium).